The sequence spans 465 residues: FeMo cofactor biosynthesis protein FixZ (465 aa).

The segment at 1 to 36 (MSEPEIKVGKTSSALFDRAPMAPSMPGGRASSSHGL) is disordered. Positions 61–312 (HHYFARMHXX…MRHCQQCRAD (252 aa)) constitute a Radical SAM core domain. Residues C75 and C79 each contribute to the [4Fe-4S] cluster site. Residue Y81 participates in S-adenosyl-L-methionine binding. C82 contributes to the [4Fe-4S] cluster binding site. Residues G129, T181, and I233 each contribute to the S-adenosyl-L-methionine site. [4Fe-4S] cluster-binding residues include C306 and C309.

This sequence belongs to the radical SAM superfamily. NifB family. [4Fe-4S] cluster is required as a cofactor.

It functions in the pathway cofactor biosynthesis; Fe-Mo cofactor biosynthesis. Functionally, involved in the biosynthesis of the iron-molybdenum cofactor (FeMo-co or M-cluster) found in the dinitrogenase enzyme of the nitrogenase complex in nitrogen-fixing microorganisms. Catalyzes the crucial step of radical SAM-dependent carbide insertion that occurs concomitant with the insertion of a 9th sulfur and the rearrangement/coupling of two [4Fe-4S] clusters into a [8Fe-9S-C] cluster, the precursor to the M-cluster. The polypeptide is FeMo cofactor biosynthesis protein FixZ (fixZ) (Rhizobium leguminosarum).